The following is a 164-amino-acid chain: Crossover junction endodeoxyribonuclease RuvC (164 aa).

Residues D7, E67, and D140 contribute to the active site. Mg(2+) is bound by residues D7, E67, and D140.

The protein belongs to the RuvC family. In terms of assembly, homodimer which binds Holliday junction (HJ) DNA. The HJ becomes 2-fold symmetrical on binding to RuvC with unstacked arms; it has a different conformation from HJ DNA in complex with RuvA. In the full resolvosome a probable DNA-RuvA(4)-RuvB(12)-RuvC(2) complex forms which resolves the HJ. Requires Mg(2+) as cofactor.

It is found in the cytoplasm. The catalysed reaction is Endonucleolytic cleavage at a junction such as a reciprocal single-stranded crossover between two homologous DNA duplexes (Holliday junction).. In terms of biological role, the RuvA-RuvB-RuvC complex processes Holliday junction (HJ) DNA during genetic recombination and DNA repair. Endonuclease that resolves HJ intermediates. Cleaves cruciform DNA by making single-stranded nicks across the HJ at symmetrical positions within the homologous arms, yielding a 5'-phosphate and a 3'-hydroxyl group; requires a central core of homology in the junction. The consensus cleavage sequence is 5'-(A/T)TT(C/G)-3'. Cleavage occurs on the 3'-side of the TT dinucleotide at the point of strand exchange. HJ branch migration catalyzed by RuvA-RuvB allows RuvC to scan DNA until it finds its consensus sequence, where it cleaves and resolves the cruciform DNA. This Chloroflexus aggregans (strain MD-66 / DSM 9485) protein is Crossover junction endodeoxyribonuclease RuvC.